A 285-amino-acid chain; its full sequence is 2-dehydro-3-deoxyphosphooctonate aldolase (285 aa).

This sequence belongs to the KdsA family.

Its subcellular location is the cytoplasm. It carries out the reaction D-arabinose 5-phosphate + phosphoenolpyruvate + H2O = 3-deoxy-alpha-D-manno-2-octulosonate-8-phosphate + phosphate. Its pathway is carbohydrate biosynthesis; 3-deoxy-D-manno-octulosonate biosynthesis; 3-deoxy-D-manno-octulosonate from D-ribulose 5-phosphate: step 2/3. The protein operates within bacterial outer membrane biogenesis; lipopolysaccharide biosynthesis. The polypeptide is 2-dehydro-3-deoxyphosphooctonate aldolase (Bordetella bronchiseptica (strain ATCC BAA-588 / NCTC 13252 / RB50) (Alcaligenes bronchisepticus)).